The primary structure comprises 59 residues: UPF0391 membrane protein AZC_4184 (59 aa).

The next 2 helical transmembrane spans lie at 4–24 and 30–50; these read WALT…TAVA and IAKI…VMGF.

It belongs to the UPF0391 family.

It is found in the cell membrane. This Azorhizobium caulinodans (strain ATCC 43989 / DSM 5975 / JCM 20966 / LMG 6465 / NBRC 14845 / NCIMB 13405 / ORS 571) protein is UPF0391 membrane protein AZC_4184.